The following is a 383-amino-acid chain: Na(+)/H(+) antiporter NhaA (383 aa).

The next 11 membrane-spanning stretches (helical) occupy residues 10–30 (LIGG…NNSP), 56–76 (LMHW…GLEI), 91–111 (IITP…IYLS), 121–141 (GWAI…ALLG), 150–170 (LLVI…IAIF), 174–194 (SLSL…IICN), 206–226 (VVLG…ATLA), 254–274 (PWII…ISFS), 275–295 (GISF…GLFV), 327–347 (GISL…VLAF), and 355–375 (AIKI…YIVL).

It belongs to the NhaA Na(+)/H(+) (TC 2.A.33) antiporter family.

The protein resides in the cell inner membrane. The enzyme catalyses Na(+)(in) + 2 H(+)(out) = Na(+)(out) + 2 H(+)(in). Its function is as follows. Na(+)/H(+) antiporter that extrudes sodium in exchange for external protons. This Francisella tularensis subsp. novicida (strain U112) protein is Na(+)/H(+) antiporter NhaA.